A 115-amino-acid chain; its full sequence is UPF0738 protein SH1953 (115 aa).

This sequence belongs to the UPF0738 family.

This is UPF0738 protein SH1953 from Staphylococcus haemolyticus (strain JCSC1435).